A 402-amino-acid chain; its full sequence is CCA-adding enzyme (402 aa).

Positions 32 and 35 each coordinate ATP. CTP-binding residues include Gly-32 and Arg-35. Asp-45 and Asp-47 together coordinate Mg(2+). Residues Arg-116, Asp-159, Arg-162, Arg-165, and Arg-168 each coordinate ATP. Residues Arg-116, Asp-159, Arg-162, Arg-165, and Arg-168 each contribute to the CTP site.

It belongs to the tRNA nucleotidyltransferase/poly(A) polymerase family. Bacterial CCA-adding enzyme type 3 subfamily. As to quaternary structure, homodimer. The cofactor is Mg(2+).

The enzyme catalyses a tRNA precursor + 2 CTP + ATP = a tRNA with a 3' CCA end + 3 diphosphate. The catalysed reaction is a tRNA with a 3' CCA end + 2 CTP + ATP = a tRNA with a 3' CCACCA end + 3 diphosphate. Its function is as follows. Catalyzes the addition and repair of the essential 3'-terminal CCA sequence in tRNAs without using a nucleic acid template. Adds these three nucleotides in the order of C, C, and A to the tRNA nucleotide-73, using CTP and ATP as substrates and producing inorganic pyrophosphate. tRNA 3'-terminal CCA addition is required both for tRNA processing and repair. Also involved in tRNA surveillance by mediating tandem CCA addition to generate a CCACCA at the 3' terminus of unstable tRNAs. While stable tRNAs receive only 3'-terminal CCA, unstable tRNAs are marked with CCACCA and rapidly degraded. The sequence is that of CCA-adding enzyme from Streptococcus pyogenes serotype M4 (strain MGAS10750).